The following is a 297-amino-acid chain: Pyrroline-5-carboxylate reductase 1 (297 aa).

It belongs to the pyrroline-5-carboxylate reductase family.

It localises to the cytoplasm. The enzyme catalyses L-proline + NADP(+) = (S)-1-pyrroline-5-carboxylate + NADPH + 2 H(+). The catalysed reaction is L-proline + NAD(+) = (S)-1-pyrroline-5-carboxylate + NADH + 2 H(+). Its pathway is amino-acid biosynthesis; L-proline biosynthesis; L-proline from L-glutamate 5-semialdehyde: step 1/1. Catalyzes the reduction of 1-pyrroline-5-carboxylate (PCA) to L-proline. This is Pyrroline-5-carboxylate reductase 1 (proH) from Bacillus subtilis (strain 168).